Reading from the N-terminus, the 131-residue chain is Probable ATP synthase subunit g 2, mitochondrial (131 aa).

This sequence belongs to the ATPase g subunit family. In terms of assembly, subunit of the F-type ATPase which has 2 components, CF(1) - the catalytic core - and CF(0) - the membrane proton channel.

It is found in the mitochondrion membrane. Its function is as follows. Mitochondrial membrane ATP synthase (F(1)F(0) ATP synthase or Complex V) produces ATP from ADP in the presence of a proton gradient across the membrane which is generated by electron transport complexes of the respiratory chain. F-type ATPases consist of two structural domains, F(1) - containing the extramembraneous catalytic core, and F(0) - containing the membrane proton channel, linked together by a central stalk and a peripheral stalk. During catalysis, ATP synthesis in the catalytic domain of F(1) is coupled via a rotary mechanism of the central stalk subunits to proton translocation. Part of the complex F(0) domain. Minor subunit located with subunit a in the membrane. This is Probable ATP synthase subunit g 2, mitochondrial from Caenorhabditis elegans.